The chain runs to 1230 residues: Cullin-associated NEDD8-dissociated protein 1 (1230 aa).

An N-acetylalanine modification is found at Ala2. HEAT repeat units lie at residues 2–39 (ASAS…KDSI), 44–81 (DSER…KVKE), 83–119 (QVET…ELPP), 131–165 (CKKI…LSRQ), 171–208 (NFHP…SCGN), 210–247 (VFVD…QAGH), 248–282 (RIGE…FESF), 289–366 (EVYP…TRHE), 370–407 (EFYK…QTRP), 424–467 (PLTM…VLPG), 471–510 (QHIP…NHSP), and 515–552 (PHVQ…VIRP). Lys55 is modified (N6-acetyllysine). The disordered stretch occupies residues 315–344 (DEDEDENAMDADGGDDDDQGSDDEYSDDDD). Ser335 carries the phosphoserine modification. Ser558 carries the post-translational modification Phosphoserine. HEAT repeat units lie at residues 563–602 (PYIK…NLGD), 606–643 (SDLP…LKID), 646–683 (PVLG…NYSD), 688–725 (AMID…VYPS), 729–768 (KISG…TGTN), 770–808 (LGYM…ALTR), 809–845 (ACPK…LGEV), 852–889 (SGQL…GNLP), 890–927 (EYLP…GLKP), 928–960 (YVEN…KLTL), 961–998 (IDPE…DHPQ), 1002–1039 (PLLK…NKPS), 1043–1097 (DLLD…DSCL), 1099–1133 (RLDI…LSTL), and 1140–1189 (QRLD…IPEA). Lys971 carries the N6-acetyllysine modification.

This sequence belongs to the CAND family. Interacts with TBP. Part of a complex that contains CUL1 and RBX1. Interacts with unneddylated cullins: interacts with CUL1, CUL2, CUL3, CUL4A, CUL4B and CUL5. Does not bind neddylated CUL1. Interaction with cullins is abolished in presence of COMMD1, which antagonizes with CAND1 for interacting with cullins. Interacts with ERCC6. Interacts with DCUN1D1, DCUN1D2, DCUN1D3, DCUN1D4 and DCUN1D5; these interactions are bridged by cullins and strongly inhibits the neddylation of cullins.

The protein resides in the cytoplasm. It localises to the nucleus. Its function is as follows. Key assembly factor of SCF (SKP1-CUL1-F-box protein) E3 ubiquitin ligase complexes that promotes the exchange of the substrate-recognition F-box subunit in SCF complexes, thereby playing a key role in the cellular repertoire of SCF complexes. Acts as a F-box protein exchange factor. The exchange activity of CAND1 is coupled with cycles of neddylation conjugation: in the deneddylated state, cullin-binding CAND1 binds CUL1-RBX1, increasing dissociation of the SCF complex and promoting exchange of the F-box protein. Probably plays a similar role in other cullin-RING E3 ubiquitin ligase complexes. This chain is Cullin-associated NEDD8-dissociated protein 1 (CAND1), found in Bos taurus (Bovine).